The chain runs to 158 residues: 3-dehydroquinate dehydratase (158 aa).

Tyr-24 (proton acceptor) is an active-site residue. The substrate site is built by Asn-75, His-81, and Asp-88. His-101 (proton donor) is an active-site residue. Substrate is bound by residues 102–103 (LS) and Arg-112.

It belongs to the type-II 3-dehydroquinase family. As to quaternary structure, homododecamer.

The catalysed reaction is 3-dehydroquinate = 3-dehydroshikimate + H2O. It participates in metabolic intermediate biosynthesis; chorismate biosynthesis; chorismate from D-erythrose 4-phosphate and phosphoenolpyruvate: step 3/7. Functionally, catalyzes a trans-dehydration via an enolate intermediate. In Bartonella bacilliformis (strain ATCC 35685 / KC583 / Herrer 020/F12,63), this protein is 3-dehydroquinate dehydratase.